The chain runs to 845 residues: Prickle-like protein 2 (845 aa).

The 109-residue stretch at 18-126 (FDFQRSSTSD…NVRPFPVTMT (109 aa)) folds into the PET domain. S92 carries the post-translational modification Phosphoserine. LIM zinc-binding domains lie at 128–193 (AICE…CLKP), 193–253 (PRCA…LYAE), and 253–317 (EYCD…EDPN). Disordered regions lie at residues 314–346 (EDPNGSDSSDSAFQNARAKESRRSAKIGKNKGK) and 483–546 (YSDM…GSME). Over residues 318–327 (GSDSSDSAFQ) the composition is skewed to polar residues. 3 positions are modified to phosphoserine: S319, S321, and S322. Residues T535, T537, and T540 each carry the phosphothreonine modification. Phosphoserine occurs at positions 544 and 547. Residues 558 to 581 (AEGGAKRQEHLSRFSMPDLSKDSG) form a disordered region. Residues S608 and S643 each carry the phosphoserine modification. Positions 642 to 700 (QSFDFDGGIASSKLPGQEGVHIQPMSERTRRRTTSRDDNRRFRPHRSRRSRRSRSDNAL) are disordered. The span at 683 to 693 (FRPHRSRRSRR) shows a compositional bias: basic residues. S732 bears the Phosphoserine mark. The interval 823–845 (STLGGRGQLHSRKRQKSKNCIIS) is disordered. C842 bears the Cysteine methyl ester mark. C842 is lipidated: S-farnesyl cysteine. A propeptide spans 843 to 845 (IIS) (removed in mature form).

This sequence belongs to the prickle / espinas / testin family. In terms of tissue distribution, expressed in the hippocampus and cerebral cortex.

It localises to the nucleus membrane. In Mus musculus (Mouse), this protein is Prickle-like protein 2 (Prickle2).